Reading from the N-terminus, the 116-residue chain is Large-conductance mechanosensitive channel (116 aa).

A run of 2 helical transmembrane segments spans residues 7–27 (EFAL…GAAF) and 64–84 (GLFI…FIFV).

This sequence belongs to the MscL family. In terms of assembly, homopentamer.

Its subcellular location is the cell membrane. Its function is as follows. Channel that opens in response to stretch forces in the membrane lipid bilayer. May participate in the regulation of osmotic pressure changes within the cell. This is Large-conductance mechanosensitive channel from Staphylococcus epidermidis (strain ATCC 35984 / DSM 28319 / BCRC 17069 / CCUG 31568 / BM 3577 / RP62A).